A 1807-amino-acid polypeptide reads, in one-letter code: Nucleoporin nup189 (1807 aa).

A disordered region spans residues 1 to 118; that stretch reads MFGQNNSSGF…SGGGLFGSNT (118 aa). GLFG repeat units lie at residues 26–29 and 66–69; these read GLFG. Residues 29–61 are compositionally biased toward polar residues; it reads GSNSNTPGNTLFGSQNTSTTGFGQNTTQPLFGS. Over residues 62-77 the composition is skewed to low complexity; the sequence is NTNGGLFGNRNNTTTT. Positions 78–90 are enriched in gly residues; sequence GGTGFGMSSGTGM. Residues 93–108 are compositionally biased toward polar residues; the sequence is QSNTPAFGGTNNATNP. GLFG repeat units follow at residues 112–115, 152–155, 177–180, 308–311, 335–338, 350–353, 381–384, 399–402, 435–438, and 521–524; these read GLFG. Residues 565–584 are compositionally biased toward polar residues; it reads PGTGLFGSTQTNNATSNTGT. The tract at residues 565-685 is disordered; the sequence is PGTGLFGSTQ…SSTTSQVAPT (121 aa). 4 GLFG repeats span residues 585–588, 611–614, 627–630, and 646–649; these read GLFG. Low complexity predominate over residues 588–600; it reads GSNNANTTNTGGS. The span at 603–644 shows a compositional bias: polar residues; it reads NKPSTTTGGLFGNTTAQQPSTTTSGLFGASNTNNQAQTSNFG. Residues 653–663 show a composition bias toward low complexity; it reads AGQQQQPLQAS. Positions 664–685 are enriched in polar residues; it reads IDQNPYGNNPLFSSTTSQVAPT. The residue at position 724 (Ser724) is a Phosphoserine. A disordered region spans residues 785 to 814; the sequence is QNGVKNGNDAKSDSKVQEKAPQNEADGSLK. Residues 792 to 802 are compositionally biased toward basic and acidic residues; the sequence is NDAKSDSKVQE. Residues 822 to 963 enclose the Peptidase S59 domain; that stretch reads SDDYWMKPSI…GKWIFKVQHF (142 aa). A disordered region spans residues 974 to 1020; it reads EENDMSSTSNEAGNLKKYDQPNLKVSGKNDSFVTHHTPGAFPNDSKN. Ser1051 is modified (phosphoserine). Residues 1082–1104 are disordered; sequence KENNVPLSEDDLSNSSESSNESV. Positions 1094–1104 are enriched in low complexity; it reads SNSSESSNESV.

It belongs to the nucleoporin GLFG family. In terms of assembly, interacts (via G-L-F-G repeats) with rpn15/dss1. Interacts with raf1. As to quaternary structure, interacts with ned1. In terms of processing, nup189 is autocatalytically cleaved in nup98 and nup96.

The protein localises to the nucleus. It localises to the nuclear pore complex. Functionally, functions as a component of the nuclear pore complex (NPC). NPC components, collectively referred to as nucleoporins (NUPs), can play the role of both NPC structural components and of docking or interaction partners for transiently associated nuclear transport factors. Active directional transport is assured by both, a Phe-Gly (FG) repeat affinity gradient for these transport factors across the NPC and a transport cofactor concentration gradient across the nuclear envelope. Nup189 is autocatalytically cleaved in vivo in 2 polypeptides which assume different functions in the NPC. Nup98 as one of the FG repeat nucleoporins participates in karyopherin interactions and contains part of the autocatalytic cleavage activity. Nup96 as part of the NUP84 complex is involved in nuclear poly(A)+ RNA and tRNA export. The sequence is that of Nucleoporin nup189 (nup189) from Schizosaccharomyces pombe (strain 972 / ATCC 24843) (Fission yeast).